We begin with the raw amino-acid sequence, 890 residues long: DNA mismatch repair protein MutS (890 aa).

Residue 607 to 614 (GPNMSGKS) participates in ATP binding. Residues 832–851 (ESQLSFFGGEQSSKKQDKPL) are disordered.

Belongs to the DNA mismatch repair MutS family.

Functionally, this protein is involved in the repair of mismatches in DNA. It is possible that it carries out the mismatch recognition step. This protein has a weak ATPase activity. In Bacillus cereus (strain B4264), this protein is DNA mismatch repair protein MutS.